The sequence spans 188 residues: dCTP deaminase (188 aa).

Residues 111 to 116, 135 to 137, glutamine 156, tyrosine 170, and glutamine 180 each bind dCTP; these read KSTYAR and TLE. The active-site Proton donor/acceptor is the glutamate 137.

This sequence belongs to the dCTP deaminase family. As to quaternary structure, homotrimer.

It catalyses the reaction dCTP + H2O + H(+) = dUTP + NH4(+). Its pathway is pyrimidine metabolism; dUMP biosynthesis; dUMP from dCTP (dUTP route): step 1/2. Functionally, catalyzes the deamination of dCTP to dUTP. This is dCTP deaminase from Dechloromonas aromatica (strain RCB).